Here is a 207-residue protein sequence, read N- to C-terminus: Probable GTP-binding protein EngB (207 aa).

The 178-residue stretch at 25 to 202 folds into the EngB-type G domain; it reads DVPEIAFVGR…ATLLWQWAHP (178 aa). GTP is bound by residues 33–40, 60–64, 82–85, 152–155, and 181–183; these read GRSNAGKS, GRTQH, DLPG, TKAD, and FSA. Mg(2+) contacts are provided by Ser40 and Thr62.

It belongs to the TRAFAC class TrmE-Era-EngA-EngB-Septin-like GTPase superfamily. EngB GTPase family. The cofactor is Mg(2+).

Functionally, necessary for normal cell division and for the maintenance of normal septation. This chain is Probable GTP-binding protein EngB, found in Albidiferax ferrireducens (strain ATCC BAA-621 / DSM 15236 / T118) (Rhodoferax ferrireducens).